The primary structure comprises 356 residues: DNA polymerase IV (356 aa).

Residues 6-187 (IIHIDMDYFF…LDIGDFPGVG (182 aa)) form the UmuC domain. 2 residues coordinate Mg(2+): Asp-10 and Asp-105. Glu-106 is a catalytic residue.

It belongs to the DNA polymerase type-Y family. As to quaternary structure, monomer. It depends on Mg(2+) as a cofactor.

It localises to the cytoplasm. It carries out the reaction DNA(n) + a 2'-deoxyribonucleoside 5'-triphosphate = DNA(n+1) + diphosphate. Poorly processive, error-prone DNA polymerase involved in untargeted mutagenesis. Copies undamaged DNA at stalled replication forks, which arise in vivo from mismatched or misaligned primer ends. These misaligned primers can be extended by PolIV. Exhibits no 3'-5' exonuclease (proofreading) activity. May be involved in translesional synthesis, in conjunction with the beta clamp from PolIII. The chain is DNA polymerase IV from Staphylococcus aureus (strain MRSA252).